The chain runs to 293 residues: Homeobox protein ceh-24 (293 aa).

Composition is skewed to basic and acidic residues over residues 1–15 (MSEKESPSPQHKKDE) and 22–38 (QETKDSEDDATKKMKIK). Disordered regions lie at residues 1 to 38 (MSEKESPSPQHKKDEVVDDTEQETKDSEDDATKKMKIK) and 203 to 256 (EKEK…SNGV). A DNA-binding region (homeobox) is located at residues 144–203 (RRKRRVLFSQAQVYELERRFKQAKYLTAPEREQLANSIRLTPTQVKIWFQNHRYKCKRQE).

It belongs to the NK-2 homeobox family. As to expression, expressed in the 8 vulval muscles, 8-10 ventral neurons in the head and in the most posterior pharyngeal muscle cell, m8.

It is found in the nucleus. Its function is as follows. Probable transcriptional regulator that is required in neural development for the normal formation of sublateral cholinergic motor neuron processes. Plays a role in regulating the expression of acetylcholine transporter protein unc-17 in the sublateral processes. In particular, it is required in sublateral motor neurons for a left-right turning behavior that occurs during the lethargus phase of the normal sleep process called 'flipping'. During 'flipping' animals rotate 180 degrees about their longitudinal axis. This chain is Homeobox protein ceh-24, found in Caenorhabditis briggsae.